Here is a 413-residue protein sequence, read N- to C-terminus: Exodeoxyribonuclease 7 large subunit (413 aa).

The protein belongs to the XseA family. In terms of assembly, heterooligomer composed of large and small subunits.

The protein localises to the cytoplasm. It carries out the reaction Exonucleolytic cleavage in either 5'- to 3'- or 3'- to 5'-direction to yield nucleoside 5'-phosphates.. Bidirectionally degrades single-stranded DNA into large acid-insoluble oligonucleotides, which are then degraded further into small acid-soluble oligonucleotides. The protein is Exodeoxyribonuclease 7 large subunit of Corynebacterium efficiens (strain DSM 44549 / YS-314 / AJ 12310 / JCM 11189 / NBRC 100395).